The following is a 310-amino-acid chain: uncharacterized protein (310 aa).

3 disordered regions span residues Met-1–Met-53, Pro-78–Asn-127, and Gln-153–Leu-217. Residues Gly-11 to Asp-25 are compositionally biased toward acidic residues. Composition is skewed to polar residues over residues Ser-37–Leu-49 and Pro-78–Pro-88. Composition is skewed to low complexity over residues Gln-94–Thr-126, Pro-164–Thr-184, and Tyr-192–Thr-208. Positions Asp-268 to Gln-299 form a coiled coil.

This is an uncharacterized protein from Dictyostelium discoideum (Social amoeba).